A 393-amino-acid chain; its full sequence is S-adenosylmethionine synthase (393 aa).

E10 provides a ligand contact to Mg(2+). H16 contributes to the ATP binding site. E44 lines the K(+) pocket. L-methionine is bound by residues E57 and Q100. Residues 168–170 (DGK), 236–239 (SGRF), D247, 253–254 (RK), A270, K274, and K278 contribute to the ATP site. An L-methionine-binding site is contributed by D247. An L-methionine-binding site is contributed by K278.

Belongs to the AdoMet synthase family. As to quaternary structure, homotetramer. It depends on Mn(2+) as a cofactor. The cofactor is Mg(2+). Co(2+) serves as cofactor. K(+) is required as a cofactor.

It is found in the cytoplasm. It carries out the reaction L-methionine + ATP + H2O = S-adenosyl-L-methionine + phosphate + diphosphate. The protein operates within amino-acid biosynthesis; S-adenosyl-L-methionine biosynthesis; S-adenosyl-L-methionine from L-methionine: step 1/1. In terms of biological role, catalyzes the formation of S-adenosylmethionine from methionine and ATP. The reaction comprises two steps that are both catalyzed by the same enzyme: formation of S-adenosylmethionine (AdoMet) and triphosphate, and subsequent hydrolysis of the triphosphate. This is S-adenosylmethionine synthase (METK) from Musa acuminata (Banana).